The sequence spans 134 residues: MSWQAYVDDHLMCDIEGHEDHRLTAAAIVGHDGSVWAQSATFPQFKPEEMNGIMTDFSEPGHLAPTGLHLGGTKYMVVQGEAGAVIRGKKGSGGITIKKTGQALVFGIYEEPVTPGQCNMVVERLGDYLLEQGL.

The cysteines at positions 13 and 118 are disulfide-linked. Positions 84 to 100 (AVIRGKKGSGGITIKKT) match the Involved in PIP2 interaction motif. T114 carries the phosphothreonine modification.

This sequence belongs to the profilin family. Occurs in many kinds of cells as a complex with monomeric actin in a 1:1 ratio. Phosphorylated by MAP kinases.

The protein localises to the cytoplasm. It localises to the cytoskeleton. In terms of biological role, binds to actin and affects the structure of the cytoskeleton. At high concentrations, profilin prevents the polymerization of actin, whereas it enhances it at low concentrations. The polypeptide is Profilin-2 (Olea europaea (Common olive)).